The chain runs to 271 residues: MPELPEVEVTRQGVSPYLIDNTVTDLIVRNPSLRWPVPEIAKQIIGQTIRNVRRRAKYLLIDTDAGTTIVHLGMSGSLRILPATTPAEKHDHIDLVLASGKALRFNDPRRFGAWLWCELPEQAHPLLSKLGPEPLTDAFNAPYLLESLANKKKAIKLCLMDNHIVVGVGNIYANEALFAAGIHPQAEAGKVDAERIEILVSEVKQILAGAIKQGGTTLKDFTNADGKPGYFAQKLHVYGRGGKTCTQCGHMLSEIKLGQRATVFCSLCQQR.

The Schiff-base intermediate with DNA role is filled by Pro-2. The active-site Proton donor is the Glu-3. Residue Lys-57 is the Proton donor; for beta-elimination activity of the active site. DNA contacts are provided by His-90, Arg-109, and Lys-151. The FPG-type zinc-finger motif lies at 236–270; that stretch reads HVYGRGGKTCTQCGHMLSEIKLGQRATVFCSLCQQ. Catalysis depends on Arg-260, which acts as the Proton donor; for delta-elimination activity.

Belongs to the FPG family. Monomer. It depends on Zn(2+) as a cofactor.

It carries out the reaction Hydrolysis of DNA containing ring-opened 7-methylguanine residues, releasing 2,6-diamino-4-hydroxy-5-(N-methyl)formamidopyrimidine.. The catalysed reaction is 2'-deoxyribonucleotide-(2'-deoxyribose 5'-phosphate)-2'-deoxyribonucleotide-DNA = a 3'-end 2'-deoxyribonucleotide-(2,3-dehydro-2,3-deoxyribose 5'-phosphate)-DNA + a 5'-end 5'-phospho-2'-deoxyribonucleoside-DNA + H(+). Its function is as follows. Involved in base excision repair of DNA damaged by oxidation or by mutagenic agents. Acts as a DNA glycosylase that recognizes and removes damaged bases. Has a preference for oxidized purines, such as 7,8-dihydro-8-oxoguanine (8-oxoG). Has AP (apurinic/apyrimidinic) lyase activity and introduces nicks in the DNA strand. Cleaves the DNA backbone by beta-delta elimination to generate a single-strand break at the site of the removed base with both 3'- and 5'-phosphates. The sequence is that of Formamidopyrimidine-DNA glycosylase from Shewanella pealeana (strain ATCC 700345 / ANG-SQ1).